Reading from the N-terminus, the 391-residue chain is Transaldolase (391 aa).

The segment at 1-329 (MGKNLLEQLR…RLKVLDGQEH (329 aa)) is transaldolase. Lys136 serves as the catalytic Schiff-base intermediate with substrate. EF-hand domains lie at 329-364 (HIKHGAEEIFHAYDLDGDGFITREEWAGTDVVFDAL) and 365-387 (DRDHDGKITAAEMSAGLGAAFRL). Ca(2+) is bound by residues Asp342, Asp344, Asp346, Glu353, Asp365, Asp367, Asp369, Lys371, and Glu376.

The protein belongs to the transaldolase family. Type 1 subfamily.

The protein resides in the cytoplasm. The enzyme catalyses D-sedoheptulose 7-phosphate + D-glyceraldehyde 3-phosphate = D-erythrose 4-phosphate + beta-D-fructose 6-phosphate. It participates in carbohydrate degradation; pentose phosphate pathway; D-glyceraldehyde 3-phosphate and beta-D-fructose 6-phosphate from D-ribose 5-phosphate and D-xylulose 5-phosphate (non-oxidative stage): step 2/3. Functionally, transaldolase is important for the balance of metabolites in the pentose-phosphate pathway. The protein is Transaldolase of Synechocystis sp. (strain ATCC 27184 / PCC 6803 / Kazusa).